Here is a 275-residue protein sequence, read N- to C-terminus: Bis(5'-nucleosyl)-tetraphosphatase, symmetrical (275 aa).

Belongs to the Ap4A hydrolase family.

The catalysed reaction is P(1),P(4)-bis(5'-adenosyl) tetraphosphate + H2O = 2 ADP + 2 H(+). Hydrolyzes diadenosine 5',5'''-P1,P4-tetraphosphate to yield ADP. The sequence is that of Bis(5'-nucleosyl)-tetraphosphatase, symmetrical from Nitrosospira multiformis (strain ATCC 25196 / NCIMB 11849 / C 71).